Consider the following 104-residue polypeptide: NADH-quinone oxidoreductase subunit K (104 aa).

Helical transmembrane passes span 4-24 (VPASAYLTLAIILFCIGLFGA), 31-51 (VIVLVCIELMLNAANLNLVAF), and 67-87 (LFTMAVAAAEAAVGLAILIAL).

The protein belongs to the complex I subunit 4L family. NDH-1 is composed of 14 different subunits. Subunits NuoA, H, J, K, L, M, N constitute the membrane sector of the complex.

The protein resides in the cell membrane. The enzyme catalyses a quinone + NADH + 5 H(+)(in) = a quinol + NAD(+) + 4 H(+)(out). In terms of biological role, NDH-1 shuttles electrons from NADH, via FMN and iron-sulfur (Fe-S) centers, to quinones in the respiratory chain. The immediate electron acceptor for the enzyme in this species is believed to be a menaquinone. Couples the redox reaction to proton translocation (for every two electrons transferred, four hydrogen ions are translocated across the cytoplasmic membrane), and thus conserves the redox energy in a proton gradient. The protein is NADH-quinone oxidoreductase subunit K of Bacillus cereus (strain Q1).